Consider the following 212-residue polypeptide: Large ribosomal subunit protein uL3 (212 aa).

An N5-methylglutamine modification is found at glutamine 153.

Belongs to the universal ribosomal protein uL3 family. In terms of assembly, part of the 50S ribosomal subunit. Forms a cluster with proteins L14 and L19. Post-translationally, methylated by PrmB.

Its function is as follows. One of the primary rRNA binding proteins, it binds directly near the 3'-end of the 23S rRNA, where it nucleates assembly of the 50S subunit. The chain is Large ribosomal subunit protein uL3 from Shewanella frigidimarina (strain NCIMB 400).